Reading from the N-terminus, the 295-residue chain is Large ribosomal subunit protein uL29m (295 aa).

This sequence belongs to the universal ribosomal protein uL29 family. As to quaternary structure, component of the mitochondrial large ribosomal subunit. Mature mitochondrial ribosomes consist of a small (37S) and a large (54S) subunit. The 37S subunit contains at least 33 different proteins and 1 molecule of RNA (15S). The 54S subunit contains at least 45 different proteins and 1 molecule of RNA (21S).

The protein resides in the mitochondrion. This chain is Large ribosomal subunit protein uL29m (MRPL4), found in Meyerozyma guilliermondii (strain ATCC 6260 / CBS 566 / DSM 6381 / JCM 1539 / NBRC 10279 / NRRL Y-324) (Yeast).